The primary structure comprises 178 residues: Inorganic pyrophosphatase (178 aa).

Positions 30, 44, and 56 each coordinate substrate. Mg(2+) is bound by residues D66, D71, and D103. Y140 provides a ligand contact to substrate.

Belongs to the PPase family. In terms of assembly, homohexamer. Requires Mg(2+) as cofactor.

It is found in the cytoplasm. The enzyme catalyses diphosphate + H2O = 2 phosphate + H(+). Functionally, catalyzes the hydrolysis of inorganic pyrophosphate (PPi) forming two phosphate ions. The polypeptide is Inorganic pyrophosphatase (Pyrococcus furiosus (strain ATCC 43587 / DSM 3638 / JCM 8422 / Vc1)).